The sequence spans 366 residues: Mitochondrial carrier protein MTM1 (366 aa).

Solcar repeat units lie at residues 14–149 (ERML…IRDV), 156–250 (YPTL…CKER), and 266–359 (VHFI…SKKV). 6 helical membrane passes run 17 to 36 (LSAG…MDVV), 126 to 146 (SLTL…YEYI), 162 to 182 (LFCG…LELV), 229 to 249 (TLWR…LCKE), 268 to 286 (FINS…AICT), and 331 to 352 (LYTG…MISS).

This sequence belongs to the mitochondrial carrier (TC 2.A.29) family.

It is found in the mitochondrion inner membrane. Its function is as follows. Involved in the mitochondrial activation of SOD2 by specifically facilitating insertion of the essential manganese cofactor. Has the ability to activate iron regulon in an iron-dependent manner. Responds to calorie restriction (CR) strength. This is Mitochondrial carrier protein MTM1 (MTM1) from Saccharomyces cerevisiae (strain ATCC 204508 / S288c) (Baker's yeast).